A 118-amino-acid chain; its full sequence is Protein MGF 110-6L (118 aa).

Residues 1–18 form the signal peptide; sequence MLVIFLGILGLLASQVSS. Residue asparagine 96 is glycosylated (N-linked (GlcNAc...) asparagine; by host). The Prevents secretion from ER signature appears at 115–118; the sequence is KDEL.

It belongs to the asfivirus MGF 110 family. In terms of processing, N-glycosylated.

Its subcellular location is the host endoplasmic reticulum lumen. In terms of biological role, plays a role in virus cell tropism, and may be required for efficient virus replication in macrophages. The protein is Protein MGF 110-6L of African swine fever virus (strain Badajoz 1971 Vero-adapted) (Ba71V).